The following is a 130-amino-acid chain: Con-Ins G2 (130 aa).

The N-terminal stretch at 1 to 24 (MTTSSYFLLVALGLLLYVRQSFST) is a signal peptide. Disulfide bonds link Cys-29–Cys-100, Cys-41–Cys-103, Cys-53–Cys-116, and Cys-102–Cys-107. Residue Pro-34 is modified to 4-hydroxyproline; partial. A disordered region spans residues 54 to 74 (EEEEARRGGTNDGGKKRRRAS). Residues 59 to 92 (RRGGTNDGGKKRRRASPLWKRRRFLSMLKARAKR) constitute a propeptide, c peptide. Glu-111 carries the 4-carboxyglutamate; partial modification.

The protein belongs to the insulin family. Heterodimer of A and B chains; disulfide-linked. As to expression, expressed by the venom gland.

The protein localises to the secreted. In terms of biological role, this venom insulin, from a fish-hunting cone snail, facilitates prey capture by rapidly inducing hypoglycemic shock. Intraperitoneal injection of this peptide into zebrafish lowers blood glucose with the same potency than human insulin. In vivo, when applied to water, this peptide reduces overall locomotor activity of zebrafish larvae, observed as a significant decrease in the percentage of time spent swimming and movement frequency. This chain is Con-Ins G2, found in Conus geographus (Geography cone).